We begin with the raw amino-acid sequence, 524 residues long: Cytokinin dehydrogenase 4 (524 aa).

A signal peptide spans M1 to S26. N39 and N58 each carry an N-linked (GlcNAc...) asparagine glycan. In terms of domain architecture, FAD-binding PCMH-type spans T60–A249. FAD contacts are provided by A104, G106, and G108. H109 is subject to Pros-8alpha-FAD histidine. 2 residues coordinate FAD: S110 and Q114. A glycan (N-linked (GlcNAc...) asparagine) is linked at N124. D173, S178, S184, I188, and I239 together coordinate FAD. N411 carries N-linked (GlcNAc...) asparagine glycosylation. Y482, S517, and Q520 together coordinate FAD.

Belongs to the oxygen-dependent FAD-linked oxidoreductase family. Requires FAD as cofactor. As to expression, expressed in trichomes and in developing stomata of young growing leaves. Strong expression in stipules and in the root cap, but not detected in the root meristem.

The protein resides in the secreted. Its subcellular location is the extracellular space. It catalyses the reaction N(6)-dimethylallyladenine + A + H2O = 3-methyl-2-butenal + adenine + AH2. Catalyzes the oxidation of cytokinins, a family of N(6)-substituted adenine derivatives that are plant hormones, where the substituent is an isopentenyl group. The protein is Cytokinin dehydrogenase 4 (CKX4) of Arabidopsis thaliana (Mouse-ear cress).